Here is a 338-residue protein sequence, read N- to C-terminus: Phenylalanine--tRNA ligase alpha subunit (338 aa).

Glutamate 253 contributes to the Mg(2+) binding site.

Belongs to the class-II aminoacyl-tRNA synthetase family. Phe-tRNA synthetase alpha subunit type 1 subfamily. Tetramer of two alpha and two beta subunits. Mg(2+) is required as a cofactor.

Its subcellular location is the cytoplasm. It catalyses the reaction tRNA(Phe) + L-phenylalanine + ATP = L-phenylalanyl-tRNA(Phe) + AMP + diphosphate + H(+). This chain is Phenylalanine--tRNA ligase alpha subunit, found in Legionella pneumophila (strain Lens).